The following is a 165-amino-acid chain: Probable velvet family sexual development regulator CC1G_12219 (165 aa).

The region spanning M1–R121 is the Velvet domain.

The protein belongs to the velvet family.

It localises to the nucleus. Velvet-domain-containing protein that probably acts as a positive regulator of sexual development. This Coprinopsis cinerea (strain Okayama-7 / 130 / ATCC MYA-4618 / FGSC 9003) (Inky cap fungus) protein is Probable velvet family sexual development regulator CC1G_12219.